A 388-amino-acid polypeptide reads, in one-letter code: Cell adhesion molecule 4 (388 aa).

A signal peptide spans 1-20; it reads MGRARRFQWPLLLLWAAAAG. In terms of domain architecture, Ig-like V-type spans 21-119; that stretch reads PGTGQEVQTE…DTHHQIATLT (99 aa). The Extracellular portion of the chain corresponds to 25–324; that stretch reads QEVQTENVTV…VEAQTSVPYA (300 aa). Asn31 and Asn67 each carry an N-linked (GlcNAc...) asparagine glycan. Intrachain disulfides connect Cys44–Cys104, Cys145–Cys199, and Cys245–Cys291. Ig-like C2-type domains are found at residues 124-219 and 224-307; these read PENP…YVLD and PTAR…YVLV. Residue Asn286 is glycosylated (N-linked (GlcNAc...) asparagine). The chain crosses the membrane as a helical span at residues 325-345; the sequence is IVGGILALLVFLIICVLVGMV. Over 346–388 the chain is Cytoplasmic; it reads WCSVRQKGSYLTHEASGLDEQGEAREAFLNGGDGHKRKEEFFI. Position 361 is a phosphoserine (Ser361).

Belongs to the nectin family. Monomer and homodimer. Post-translationally, N-glycosylated. Expressed in the brain and several organs including the kidney and liver.

It localises to the membrane. In terms of biological role, involved in the cell-cell adhesion. Has calcium- and magnesium-independent cell-cell adhesion activity. May have tumor-suppressor activity. This chain is Cell adhesion molecule 4 (Cadm4), found in Mus musculus (Mouse).